A 188-amino-acid chain; its full sequence is GTP-dependent dephospho-CoA kinase (188 aa).

GTP-binding residues include aspartate 43, valine 44, aspartate 62, glutamate 121, and aspartate 144.

The protein belongs to the GTP-dependent DPCK family.

The catalysed reaction is 3'-dephospho-CoA + GTP = GDP + CoA + H(+). Its pathway is cofactor biosynthesis; coenzyme A biosynthesis. Functionally, catalyzes the GTP-dependent phosphorylation of the 3'-hydroxyl group of dephosphocoenzyme A to form coenzyme A (CoA). This chain is GTP-dependent dephospho-CoA kinase, found in Methanococcoides burtonii (strain DSM 6242 / NBRC 107633 / OCM 468 / ACE-M).